The following is a 564-amino-acid chain: Dihydroxy-acid dehydratase (564 aa).

Cys-53 contacts [2Fe-2S] cluster. Asp-85 contributes to the Mg(2+) binding site. Cys-126 contributes to the [2Fe-2S] cluster binding site. Mg(2+) is bound by residues Asp-127 and Lys-128. Lys-128 is modified (N6-carboxylysine). Cys-203 serves as a coordination point for [2Fe-2S] cluster. Glu-454 provides a ligand contact to Mg(2+). Catalysis depends on Ser-480, which acts as the Proton acceptor.

This sequence belongs to the IlvD/Edd family. Homodimer. It depends on [2Fe-2S] cluster as a cofactor. Requires Mg(2+) as cofactor.

The catalysed reaction is (2R)-2,3-dihydroxy-3-methylbutanoate = 3-methyl-2-oxobutanoate + H2O. It catalyses the reaction (2R,3R)-2,3-dihydroxy-3-methylpentanoate = (S)-3-methyl-2-oxopentanoate + H2O. It functions in the pathway amino-acid biosynthesis; L-isoleucine biosynthesis; L-isoleucine from 2-oxobutanoate: step 3/4. The protein operates within amino-acid biosynthesis; L-valine biosynthesis; L-valine from pyruvate: step 3/4. Functions in the biosynthesis of branched-chain amino acids. Catalyzes the dehydration of (2R,3R)-2,3-dihydroxy-3-methylpentanoate (2,3-dihydroxy-3-methylvalerate) into 2-oxo-3-methylpentanoate (2-oxo-3-methylvalerate) and of (2R)-2,3-dihydroxy-3-methylbutanoate (2,3-dihydroxyisovalerate) into 2-oxo-3-methylbutanoate (2-oxoisovalerate), the penultimate precursor to L-isoleucine and L-valine, respectively. The protein is Dihydroxy-acid dehydratase of Clavibacter michiganensis subsp. michiganensis (strain NCPPB 382).